Consider the following 555-residue polypeptide: Energy-dependent translational throttle protein EttA (555 aa).

ABC transporter domains are found at residues 6–259 (YTMH…AQEA) and 324–550 (LEVS…RIKY). Residue 39–46 (GLNGAGKS) coordinates ATP. The arm stretch occupies residues 95-139 (SEVVNALKRLDEVYALYADPDADFDKLAAEQGRLEEIIQAHDGHN). The ptIM stretch occupies residues 242 to 322 (GNYSSWLEQK…IPPGPRLGDK (81 aa)). Residue 356–363 (GPNGAGKS) participates in ATP binding.

The protein belongs to the ABC transporter superfamily. ABCF family. Translational throttle EttA subfamily. In terms of assembly, monomer. Probably contacts ribosomal proteins L1, L5, L33 and S7, the 16S and 23S rRNA and the P-site containing tRNA(fMet).

The protein localises to the cytoplasm. It carries out the reaction ATP + H2O = ADP + phosphate + H(+). A translation factor that gates the progression of the 70S ribosomal initiation complex (IC, containing tRNA(fMet) in the P-site) into the translation elongation cycle by using a mechanism sensitive to the ATP/ADP ratio. Binds to the 70S ribosome E-site where it modulates the state of the translating ribosome during subunit translocation. ATP hydrolysis probably frees it from the ribosome, which can enter the elongation phase. This is Energy-dependent translational throttle protein EttA from Escherichia coli O157:H7.